We begin with the raw amino-acid sequence, 1082 residues long: SURP and G-patch domain-containing protein 2 (1082 aa).

Thr7 is subject to Phosphothreonine. The interval 65 to 97 (LSGSVAHSRDAGREGLRSDVFPGPSFRSSNPSI) is disordered. Basic and acidic residues predominate over residues 71–81 (HSRDAGREGLR). Phosphoserine occurs at positions 96 and 224. Lys228 is covalently cross-linked (Glycyl lysine isopeptide (Lys-Gly) (interchain with G-Cter in SUMO2)). Position 275 is a phosphothreonine (Thr275). Residue Ser277 is modified to Phosphoserine. A Glycyl lysine isopeptide (Lys-Gly) (interchain with G-Cter in SUMO2) cross-link involves residue Lys305. Ser315, Ser573, and Ser603 each carry phosphoserine. One copy of the SURP motif 1 repeat lies at 590–633 (IDQLVKRVIEGSLSPKERTLLKEDPAYWFLSDENSLEYKYYKLK). Lys650 is covalently cross-linked (Glycyl lysine isopeptide (Lys-Gly) (interchain with G-Cter in SUMO2)). Positions 694–779 (RRATTGTQTL…QTSSPCPSAD (86 aa)) are disordered. Over residues 697 to 708 (TTGTQTLLSSGT) the composition is skewed to low complexity. Positions 727 to 738 (LPDRNDAAKDCP) are enriched in basic and acidic residues. 2 positions are modified to phosphoserine: Ser754 and Ser757. Residues 787 to 830 (TAEKLARFVAQVGPEIEQFSIENSTDNPDLWFLHDQNSSAFKFY) form an SURP motif 2 repeat. Disordered stretches follow at residues 849 to 930 (NLHT…EAAE), 982 to 1002 (RIAY…PKDL), and 1030 to 1061 (LGSL…EHKE). Ser863 carries the phosphoserine modification. Composition is skewed to acidic residues over residues 868–877 (MEGEAEFEDE) and 885–904 (LESP…DGGE). A compositionally biased stretch (basic residues) spans 990 to 999 (GRPMSKKKKP). The short motif at 995–1000 (KKKKPK) is the Nuclear localization signal element. A G-patch domain is found at 1011–1057 (DKNLGFQMLQKMGWKEGHGLGSLGKGIREPVSVGTPSEGEGLGADGQ).

As to expression, detected in adult testis, and in fetal brain and kidney.

The protein resides in the nucleus. Its function is as follows. May play a role in mRNA splicing. The chain is SURP and G-patch domain-containing protein 2 (SUGP2) from Homo sapiens (Human).